The following is a 425-amino-acid chain: Protein-glutamate methylesterase/protein-glutamine glutaminase (425 aa).

In terms of domain architecture, Response regulatory spans 22–140 (RVMVVDDSVV…EVAAADIFRH (119 aa)). D73 is modified (4-aspartylphosphate). 2 disordered regions span residues 150–174 (AAKRRRPATVASPPPDHDDYGSNAS) and 203–223 (VQREQQPRSAQAARAMSRPQP). Residues 221–417 (PQPTLRSFSA…PLQQIAPKLV (197 aa)) enclose the CheB-type methylesterase domain. Residues S241, H269, and D365 contribute to the active site.

Belongs to the CheB family. In terms of processing, phosphorylated by CheA. Phosphorylation of the N-terminal regulatory domain activates the methylesterase activity.

It localises to the cytoplasm. It catalyses the reaction [protein]-L-glutamate 5-O-methyl ester + H2O = L-glutamyl-[protein] + methanol + H(+). The enzyme catalyses L-glutaminyl-[protein] + H2O = L-glutamyl-[protein] + NH4(+). Involved in chemotaxis. Part of a chemotaxis signal transduction system that modulates chemotaxis in response to various stimuli. Catalyzes the demethylation of specific methylglutamate residues introduced into the chemoreceptors (methyl-accepting chemotaxis proteins or MCP) by CheR. Also mediates the irreversible deamidation of specific glutamine residues to glutamic acid. In Nitrobacter winogradskyi (strain ATCC 25391 / DSM 10237 / CIP 104748 / NCIMB 11846 / Nb-255), this protein is Protein-glutamate methylesterase/protein-glutamine glutaminase.